A 201-amino-acid polypeptide reads, in one-letter code: Peptide deformylase (201 aa).

The segment at methionine 1–glutamate 24 is disordered. Fe cation contacts are provided by cysteine 121 and histidine 163. Residue glutamate 164 is part of the active site. Histidine 167 contributes to the Fe cation binding site.

Belongs to the polypeptide deformylase family. It depends on Fe(2+) as a cofactor.

It catalyses the reaction N-terminal N-formyl-L-methionyl-[peptide] + H2O = N-terminal L-methionyl-[peptide] + formate. Functionally, removes the formyl group from the N-terminal Met of newly synthesized proteins. Requires at least a dipeptide for an efficient rate of reaction. N-terminal L-methionine is a prerequisite for activity but the enzyme has broad specificity at other positions. This is Peptide deformylase from Prochlorococcus marinus (strain MIT 9312).